Reading from the N-terminus, the 261-residue chain is uncharacterized protein (261 aa).

The NADP(+) site is built by isoleucine 33, aspartate 78, and asparagine 105. The active-site Proton donor is the serine 157. 3 residues coordinate NADP(+): tyrosine 172, lysine 176, and serine 206. Tyrosine 172 acts as the Proton acceptor in catalysis. Lysine 176 serves as the catalytic Lowers pKa of active site Tyr.

The protein belongs to the short-chain dehydrogenases/reductases (SDR) family.

It localises to the cytoplasm. Its subcellular location is the nucleus. This is an uncharacterized protein from Schizosaccharomyces pombe (strain 972 / ATCC 24843) (Fission yeast).